Reading from the N-terminus, the 90-residue chain is Small ribosomal subunit protein uS15c (90 aa).

The protein belongs to the universal ribosomal protein uS15 family. As to quaternary structure, part of the 30S ribosomal subunit.

The protein localises to the plastid. Its subcellular location is the chloroplast. This is Small ribosomal subunit protein uS15c (rps15) from Nandina domestica (Heavenly bamboo).